We begin with the raw amino-acid sequence, 124 residues long: MYVSISFLLGLSHLVLCCLLTFIVNFYLPPESIDFEFMAHNWSKGRSPSSTLGLSWFKAGFRFSDGWSMFYSFGLPGVALPGSPPRSHLLPGTQILIRSFQPCESAKHSARLSSLLTTTSYSVS.

Residues 1-2 (MY) are Cytoplasmic-facing. A helical membrane pass occupies residues 3–23 (VSISFLLGLSHLVLCCLLTFI). Over 24-124 (VNFYLPPESI…LLTTTSYSVS (101 aa)) the chain is Extracellular. N41 carries an N-linked (GlcNAc...) asparagine glycan.

The protein resides in the membrane. The protein is Putative transmembrane protein FLJ36131 of Homo sapiens (Human).